We begin with the raw amino-acid sequence, 766 residues long: DENN domain-containing protein 1B (766 aa).

The uDENN domain maps to 14 to 143 (DLVLKVKCHA…YNHPVPKANT (130 aa)). In terms of domain architecture, cDENN spans 160–296 (GLPTIPESRN…VVSALKNKLK (137 aa)). The region spanning 298-375 (QSTATGDGVA…DGRLAKLNAG (78 aa)) is the dDENN domain. Positions 378 to 382 (FSDIF) match the FXDXF motif motif. The disordered stretch occupies residues 472–523 (NEKGENREKHKLSQTHLKRPHKSLDGTLYDDDDDDDDIERASKISSEDGEET). The span at 480 to 492 (KHKLSQTHLKRPH) shows a compositional bias: basic residues. Positions 499-509 (LYDDDDDDDDI) are enriched in acidic residues. Tyrosine 500 is modified (phosphotyrosine). A phosphoserine mark is found at serine 516, serine 517, serine 530, and serine 533. The Clathrin box signature appears at 547-556 (DLLGEILDTL). Disordered stretches follow at residues 611-634 (LGQD…VSSG) and 652-732 (LCAD…KPSK). A phosphoserine mark is found at serine 632 and serine 633. Polar residues predominate over residues 694–704 (TPGQAPLQSED). A compositionally biased stretch (basic and acidic residues) spans 722–732 (KAGKEDTKPSK).

Interacts with RAB35. Interacts with clathrin heavy chain/CLTC. Interacts with components of the adapter protein complex 2 (AP-2) AP2A2 and AP2B1. Interacts with CD3E. Post-translationally, phosphorylated on serine and/or threonine, possibly regulating the guanine nucleotide exchange factor (GEF) activity. In terms of tissue distribution, expressed in a subset of dendritic cells (DCs).

It is found in the cytoplasm. The protein localises to the cytosol. Its subcellular location is the cytoplasmic vesicle. The protein resides in the clathrin-coated vesicle. Its function is as follows. Guanine nucleotide exchange factor (GEF) for RAB35 that acts as a regulator of T-cell receptor (TCR) internalization in TH2 cells. Acts by promoting the exchange of GDP to GTP, converting inactive GDP-bound RAB35 into its active GTP-bound form. Plays a role in clathrin-mediated endocytosis. Controls cytokine production in TH2 lymphocytes by controlling the rate of TCR internalization and routing to endosomes: acts by mediating clathrin-mediated endocytosis of TCR via its interaction with the adapter protein complex 2 (AP-2) and GEF activity. Dysregulation leads to impaired TCR down-modulation and recycling, affecting cytokine production in TH2 cells. This Mus musculus (Mouse) protein is DENN domain-containing protein 1B.